Here is a 322-residue protein sequence, read N- to C-terminus: uncharacterized protein (322 aa).

The next 5 helical transmembrane spans lie at 159 to 179 (GIIF…MLYL), 203 to 223 (MNIP…YIWL), 234 to 254 (GGIL…RVGL), 267 to 287 (FEGS…LIPY), and 296 to 316 (TLLS…FFAW).

The protein resides in the membrane. This is an uncharacterized protein from Dictyostelium discoideum (Social amoeba).